The sequence spans 212 residues: Uracil phosphoribosyltransferase (212 aa).

5-phospho-alpha-D-ribose 1-diphosphate is bound by residues Arg78, Arg103, and Asp130–Ser138. Residues Ile193 and Gly198–Ala200 contribute to the uracil site. Asp199 contacts 5-phospho-alpha-D-ribose 1-diphosphate.

The protein belongs to the UPRTase family. Requires Mg(2+) as cofactor.

It carries out the reaction UMP + diphosphate = 5-phospho-alpha-D-ribose 1-diphosphate + uracil. It participates in pyrimidine metabolism; UMP biosynthesis via salvage pathway; UMP from uracil: step 1/1. Its activity is regulated as follows. Allosterically activated by GTP. In terms of biological role, catalyzes the conversion of uracil and 5-phospho-alpha-D-ribose 1-diphosphate (PRPP) to UMP and diphosphate. The polypeptide is Uracil phosphoribosyltransferase (Ectopseudomonas mendocina (strain ymp) (Pseudomonas mendocina)).